We begin with the raw amino-acid sequence, 214 residues long: Endothelin-3 (214 aa).

The signal sequence occupies residues 1–16 (MEPGLWLLLGLTVTSA). The propeptide occupies 17 to 94 (AGLVPCPQSG…DKGLPAHHRP (78 aa)). A disordered region spans residues 24 to 91 (QSGDSGRASV…KQEDKGLPAH (68 aa)). Residues 25–35 (SGDSGRASVSQ) are compositionally biased toward polar residues. 2 disulfides stabilise this stretch: C97-C111 and C99-C107. The propeptide occupies 118–214 (INTPEQTVPY…MSRTDKAHRP (97 aa)). Residues 159–173 (CTCMGADDKACAHFC) form an endothelin-like region. A disordered region spans residues 183-214 (SGRAERPAAEEMRETGGPRQRLMSRTDKAHRP). Basic and acidic residues predominate over residues 185–198 (RAERPAAEEMRETG).

This sequence belongs to the endothelin/sarafotoxin family.

Its subcellular location is the secreted. In terms of biological role, endothelins are endothelium-derived vasoconstrictor peptides. The sequence is that of Endothelin-3 (Edn3) from Mus musculus (Mouse).